A 338-amino-acid polypeptide reads, in one-letter code: MLLLTFTLPVVTLLLAHIIRSWFRLRHIPGPFWAKITDLWREHHYIKGDYGDRPMAPYFAIPSLLGMESAMDQIQQELEDQICRRVTIDVVLWMRLFSLESLHWIAFSNKLGYLSEGKDTDGILSILQSKFIGLAGQLCGWIHRTTLRFHFPKSCTGTAVAPSQRKASHRDLLAHFMDASQKNPETLEERGVLGATISTIFAGTDTTGTSLTFFMYYLIKHPAALARLQEELDSAVRSGNLSYPPKWVEVSTLKYLQAVFKETLRLHSTARMSLYRVVGPEGLDLCGERLPSGTNLGCFGYTAHRNEPIYGRDAALFRPERWIEASNDTLLSMERASL.

An N-terminal signal peptide occupies residues 1-16 (MLLLTFTLPVVTLLLA). N-linked (GlcNAc...) asparagine glycosylation is found at Asn240 and Asn327.

The protein belongs to the cytochrome P450 family. Heme serves as cofactor.

It functions in the pathway alkaloid biosynthesis; ergot alkaloid biosynthesis. Its function is as follows. Cytochrome P450 monooxygenase; part of the gene cluster that mediates the biosynthesis of fumiclavanine C, a fungal ergot alkaloid. DmaW catalyzes the first step of ergot alkaloid biosynthesis by condensing dimethylallyl diphosphate (DMAP) and tryptophan to form 4-dimethylallyl-L-tryptophan. The second step is catalyzed by the methyltransferase easF that methylates 4-dimethylallyl-L-tryptophan in the presence of S-adenosyl-L-methionine, resulting in the formation of 4-dimethylallyl-L-abrine. The catalase easC and the FAD-dependent oxidoreductase easE then transform 4-dimethylallyl-L-abrine to chanoclavine-I which is further oxidized by EasD in the presence of NAD(+), resulting in the formation of chanoclavine-I aldehyde. EasA reduces chanoclavine-I aldehyde to dihydrochanoclavine-I aldehyde that spontaneously dehydrates to form 6,8-dimethyl-6,7-didehydroergoline. EasG then catalyzes the reduction of 6,8-dimethyl-6,7-didehydroergoline to form festuclavine. Hydrolysis of festuclavine by easM then leads to the formation of fumigaclavine B which is in turn acetylated by easN to fumigaclavine A. Finally, easL catalyzes the conversion of fumigaclavine A into fumigaclavine C by attaching a dimethylallyl moiety to C-2 of the indole nucleus. The role of the cytochrome P450 monooxygenase easK within the cluster has not been identified yet. The sequence is that of Cytochrome P450 monooxygenase easK from Aspergillus fumigatus (strain ATCC MYA-4609 / CBS 101355 / FGSC A1100 / Af293) (Neosartorya fumigata).